The sequence spans 190 residues: Endoribonuclease YbeY (190 aa).

A disordered region spans residues 1 to 20 (MDVENDRPPRRGAAGERNSG). Histidine 147, histidine 151, and histidine 157 together coordinate Zn(2+).

This sequence belongs to the endoribonuclease YbeY family. Requires Zn(2+) as cofactor.

The protein localises to the cytoplasm. Functionally, single strand-specific metallo-endoribonuclease involved in late-stage 70S ribosome quality control and in maturation of the 3' terminus of the 16S rRNA. This chain is Endoribonuclease YbeY, found in Nitrobacter hamburgensis (strain DSM 10229 / NCIMB 13809 / X14).